The chain runs to 246 residues: Probable ABC transporter permease protein BMEII0107 (246 aa).

Transmembrane regions (helical) follow at residues 12–32, 63–83, 94–114, 122–142, 172–192, and 211–231; these read LLSFAVGIGGWYLLTATGAVV, VLSGFVLGVALAIPVGFLMGW, WVQFFRMIPPLAVIPLAIVTL, IFVIFLASFLSSVVATYQGVI, VPFILVGVRIGLGSAWATVVA, and LYYDLPTIFVSLVTIGILGLF. Residues 56–236 form the ABC transmembrane type-1 domain; sequence IFASLRRVLS…ILGLFMDRLL (181 aa).

This sequence belongs to the binding-protein-dependent transport system permease family. The complex is composed of two ATP-binding proteins (BMEII0108), two transmembrane proteins (BMEII0107) and a solute-binding protein (BMEII0109).

The protein localises to the cell inner membrane. Functionally, probably part of an ABC transporter complex. Probably responsible for the translocation of the substrate across the membrane. In Brucella melitensis biotype 1 (strain ATCC 23456 / CCUG 17765 / NCTC 10094 / 16M), this protein is Probable ABC transporter permease protein BMEII0107.